Reading from the N-terminus, the 57-residue chain is Protein translocase subunit SecE (57 aa).

The chain crosses the membrane as a helical span at residues 30 to 50 (LIAGAGIVFVGFLGFLIFAIM).

It belongs to the SecE/SEC61-gamma family. As to quaternary structure, component of the Sec protein translocase complex. Heterotrimer consisting of SecY (alpha), SecG (beta) and SecE (gamma) subunits. The heterotrimers can form oligomers, although 1 heterotrimer is thought to be able to translocate proteins. Interacts with the ribosome. May interact with SecDF, and other proteins may be involved.

Its subcellular location is the cell membrane. Its function is as follows. Essential subunit of the Sec protein translocation channel SecYEG. Clamps together the 2 halves of SecY. May contact the channel plug during translocation. The sequence is that of Protein translocase subunit SecE from Haloquadratum walsbyi (strain DSM 16790 / HBSQ001).